A 500-amino-acid chain; its full sequence is 7-alpha-hydroxycholest-4-en-3-one 12-alpha-hydroxylase (500 aa).

A helical membrane pass occupies residues 2 to 21; sequence VLWGLLGALLMVMVGWLCLP. Serine 325 is subject to Phosphoserine. Cysteine 439 serves as a coordination point for heme.

The protein belongs to the cytochrome P450 family. Heme serves as cofactor. As to expression, liver (at protein level).

The protein resides in the endoplasmic reticulum membrane. Its subcellular location is the microsome membrane. It catalyses the reaction 7alpha-hydroxycholest-4-en-3-one + reduced [NADPH--hemoprotein reductase] + O2 = 7alpha,12alpha-dihydroxycholest-4-en-3-one + oxidized [NADPH--hemoprotein reductase] + H2O + H(+). The enzyme catalyses 5beta-cholestane-3alpha,7alpha-diol + reduced [NADPH--hemoprotein reductase] + O2 = 5beta-cholestane-3alpha,7alpha,12alpha-triol + oxidized [NADPH--hemoprotein reductase] + H2O + H(+). It carries out the reaction chenodeoxycholate + reduced [NADPH--hemoprotein reductase] + O2 = cholate + oxidized [NADPH--hemoprotein reductase] + H2O + H(+). It participates in lipid metabolism; bile acid biosynthesis. With respect to regulation, up-regulated upon treatment with streptozotocin. Functionally, a cytochrome P450 monooxygenase involved in primary bile acid biosynthesis. Catalyzes the 12alpha-hydroxylation of 7alpha-hydroxy-4-cholesten-3-one, an intermediate metabolite in cholic acid biosynthesis. Controls biliary balance of cholic acid and chenodeoxycholic acid, ultimately regulating the intestinal absorption of dietary lipids. Mechanistically, uses molecular oxygen inserting one oxygen atom into a substrate, and reducing the second into a water molecule, with two electrons provided by NADPH via cytochrome P450 reductase (CPR; NADPH--hemoprotein reductase). The sequence is that of 7-alpha-hydroxycholest-4-en-3-one 12-alpha-hydroxylase (CYP8B1) from Oryctolagus cuniculus (Rabbit).